Consider the following 354-residue polypeptide: Guanine nucleotide-binding protein G(i) subunit alpha-3 (354 aa).

G2 is lipidated: N-myristoyl glycine. Residue C3 is the site of S-palmitoyl cysteine attachment. Positions 32–354 (KEVKLLLLGA…KNNLKECGLY (323 aa)) constitute a G-alpha domain. Residues 35-48 (KLLLLGAGESGKST) form a G1 motif region. G42, E43, S44, G45, K46, S47, T48, D150, S151, L175, R176, T177, R178, V179, K180, T181, V201, G203, N269, K270, D272, L273, C325, A326, and T327 together coordinate GTP. S47 contributes to the Mg(2+) binding site. Positions 173 to 181 (DVLRTRVKT) are G2 motif. Mg(2+) is bound at residue T181. The tract at residues 196 to 205 (FKMFDVGGQR) is G3 motif. Residues 265-272 (ILFLNKKD) are G4 motif. The segment at 324 to 329 (TCATDT) is G5 motif.

This sequence belongs to the G-alpha family. G(i/o/t/z) subfamily. As to quaternary structure, heterotrimeric G proteins are composed of 3 units; alpha, beta and gamma. The alpha subunit contains the guanine nucleotide binding site. GTP binding causes dissociation of the heterotrimer, liberating the individual subunits so that they can interact with downstream effector proteins. Forms a complex with CCDC88A/GIV and EGFR which leads to enhanced EGFR signaling and triggering of cell migration; ligand stimulation is required for recruitment of GNAI3 to the complex. Interacts (inactive GDP-bound form) with CCDC88A/GIV (via GBA motif); the interaction leads to activation of GNAI3. Interacts (inactive GDP-bound form) with CCDC88C/DAPLE (via GBA motif); the interaction leads to activation of GNAI3. Interacts (inactive GDP-bound form) with NUCB1 (via GBA motif) and NUCB2 (via GBA motif); the interaction leads to activation of GNAI3. Interacts (inactive GDP-bound form) with PLCD4 (via GBA motif); the interaction leads to activation of GNAI3. Interacts with INSR; the interaction is probably mediated by CCDC88A/GIV. Interacts with GPSM1. Interacts (GDP-bound form) with GPSM2 (via GoLoco domains). Does not interact with RGS2. Interacts with RGS8 and RGS10; this strongly enhances the intrinsic GTPase activity. Interacts with RGS16; this strongly enhances the intrinsic GTPase activity. Interacts with RGS12. Interacts (via active GTP- or inactive GDP-bound form) with RGS14. Interacts (via active GTP-bound form) with TRPC5 (via ANK repeats) in a homotetrameric ion channel; the interaction is direct and activates the channel activity.

Its subcellular location is the cytoplasm. The protein resides in the cell membrane. It localises to the cytoskeleton. The protein localises to the microtubule organizing center. It is found in the centrosome. Its function is as follows. Heterotrimeric guanine nucleotide-binding proteins (G proteins) function as transducers downstream of G protein-coupled receptors (GPCRs) in numerous signaling cascades. The alpha chain contains the guanine nucleotide binding site and alternates between an active, GTP-bound state and an inactive, GDP-bound state. Signaling by an activated GPCR promotes GDP release and GTP binding. The alpha subunit has a low GTPase activity that converts bound GTP to GDP, thereby terminating the signal. Both GDP release and GTP hydrolysis are modulated by numerous regulatory proteins. Signaling is mediated via effector proteins, such as adenylate cyclase. Inhibits adenylate cyclase activity, leading to decreased intracellular cAMP levels. Stimulates the activity of receptor-regulated K(+) channels. The active GTP-bound form prevents the association of RGS14 with centrosomes and is required for the translocation of RGS14 from the cytoplasm to the plasma membrane. May play a role in cell division. The active GTP-bound form activates the calcium permeant TRPC5 ion channels. The sequence is that of Guanine nucleotide-binding protein G(i) subunit alpha-3 (Gnai3) from Mus musculus (Mouse).